A 655-amino-acid polypeptide reads, in one-letter code: tRNA 5-methylaminomethyl-2-thiouridine biosynthesis bifunctional protein MnmC (655 aa).

The interval 1-236 (MTDPLVPAVL…KRAMLVGRFA (236 aa)) is tRNA (mnm(5)s(2)U34)-methyltransferase. An FAD-dependent cmnm(5)s(2)U34 oxidoreductase region spans residues 260 to 655 (IGTGLAGCAA…LRALRQGTAS (396 aa)).

In the N-terminal section; belongs to the methyltransferase superfamily. tRNA (mnm(5)s(2)U34)-methyltransferase family. The protein in the C-terminal section; belongs to the DAO family. FAD serves as cofactor.

The protein localises to the cytoplasm. The enzyme catalyses 5-aminomethyl-2-thiouridine(34) in tRNA + S-adenosyl-L-methionine = 5-methylaminomethyl-2-thiouridine(34) in tRNA + S-adenosyl-L-homocysteine + H(+). Functionally, catalyzes the last two steps in the biosynthesis of 5-methylaminomethyl-2-thiouridine (mnm(5)s(2)U) at the wobble position (U34) in tRNA. Catalyzes the FAD-dependent demodification of cmnm(5)s(2)U34 to nm(5)s(2)U34, followed by the transfer of a methyl group from S-adenosyl-L-methionine to nm(5)s(2)U34, to form mnm(5)s(2)U34. This chain is tRNA 5-methylaminomethyl-2-thiouridine biosynthesis bifunctional protein MnmC, found in Paraburkholderia phymatum (strain DSM 17167 / CIP 108236 / LMG 21445 / STM815) (Burkholderia phymatum).